A 671-amino-acid polypeptide reads, in one-letter code: Beta-galactosidase 1 (671 aa).

Positions 1 to 18 (MKLIVLIFFLLFINLNYC) are cleaved as a signal peptide. The active-site Proton donor is Glu200. Asn228 carries N-linked (GlcNAc...) asparagine glycosylation. Glu288 serves as the catalytic Nucleophile. 7 N-linked (GlcNAc...) asparagine glycosylation sites follow: Asn321, Asn391, Asn400, Asn499, Asn509, Asn564, and Asn595.

Belongs to the glycosyl hydrolase 35 family.

The protein resides in the lysosome. It carries out the reaction Hydrolysis of terminal non-reducing beta-D-galactose residues in beta-D-galactosides.. Cleaves beta-linked terminal galactosyl residues from gangliosides, glycoproteins, and glycosaminoglycans. The sequence is that of Beta-galactosidase 1 (glb1) from Dictyostelium discoideum (Social amoeba).